A 639-amino-acid polypeptide reads, in one-letter code: tRNA uridine 5-carboxymethylaminomethyl modification enzyme MnmG (639 aa).

Residues 13–18, valine 125, and serine 180 each bind FAD; that span reads GGGHAG. Residue 273-287 coordinates NAD(+); the sequence is GPRYCPSIEDKVVRF. Residue glutamine 370 participates in FAD binding. Residues 620-639 form a disordered region; sequence KRQGGNGPQSPRPDDGRARA.

This sequence belongs to the MnmG family. Homodimer. Heterotetramer of two MnmE and two MnmG subunits. It depends on FAD as a cofactor.

It is found in the cytoplasm. Functionally, NAD-binding protein involved in the addition of a carboxymethylaminomethyl (cmnm) group at the wobble position (U34) of certain tRNAs, forming tRNA-cmnm(5)s(2)U34. This is tRNA uridine 5-carboxymethylaminomethyl modification enzyme MnmG from Thioalkalivibrio sulfidiphilus (strain HL-EbGR7).